The following is a 312-amino-acid chain: UDP-N-acetylenolpyruvoylglucosamine reductase (312 aa).

Positions 30–202 (RVGGPAQWLA…VAAQFQLEPG (173 aa)) constitute an FAD-binding PCMH-type domain. Arg181 is a catalytic residue. Catalysis depends on Ser232, which acts as the Proton donor. Glu302 is an active-site residue.

Belongs to the MurB family. FAD is required as a cofactor.

It is found in the cytoplasm. The enzyme catalyses UDP-N-acetyl-alpha-D-muramate + NADP(+) = UDP-N-acetyl-3-O-(1-carboxyvinyl)-alpha-D-glucosamine + NADPH + H(+). Its pathway is cell wall biogenesis; peptidoglycan biosynthesis. Cell wall formation. This chain is UDP-N-acetylenolpyruvoylglucosamine reductase, found in Synechococcus sp. (strain CC9311).